Reading from the N-terminus, the 159-residue chain is uncharacterized protein (159 aa).

Residues 1–13 are compositionally biased toward polar residues; it reads MTQPTRPSVTCDQ. The disordered stretch occupies residues 1 to 57; the sequence is MTQPTRPSVTCDQGSSTIGGTAAQATTSSSATSGSNYQRDRLGRRPEIGVGGQPQIC. Positions 14 to 35 are enriched in low complexity; that stretch reads GSSTIGGTAAQATTSSSATSGS. Basic and acidic residues predominate over residues 38–47; the sequence is QRDRLGRRPE.

This is an uncharacterized protein from Homo sapiens (Human).